The primary structure comprises 345 residues: Dihydroorotase (345 aa).

Zn(2+)-binding residues include His14 and His16. Substrate is bound by residues 16 to 18 (HLR) and Asn42. 3 residues coordinate Zn(2+): Lys102, His139, and His177. Lys102 carries the post-translational modification N6-carboxylysine. His139 contacts substrate. Residue Leu222 coordinates substrate. Position 250 (Asp250) interacts with Zn(2+). Asp250 is an active-site residue. Substrate contacts are provided by His254 and Ala266.

It belongs to the metallo-dependent hydrolases superfamily. DHOase family. Class II DHOase subfamily. Homodimer. Zn(2+) is required as a cofactor.

It carries out the reaction (S)-dihydroorotate + H2O = N-carbamoyl-L-aspartate + H(+). The protein operates within pyrimidine metabolism; UMP biosynthesis via de novo pathway; (S)-dihydroorotate from bicarbonate: step 3/3. Functionally, catalyzes the reversible cyclization of carbamoyl aspartate to dihydroorotate. This chain is Dihydroorotase, found in Nitrosomonas eutropha (strain DSM 101675 / C91 / Nm57).